The following is a 3184-amino-acid chain: WD repeat- and FYVE domain-containing protein 4 (3184 aa).

Over residues 1 to 18 (MEAEDLSKAEDRNEDPGS) the composition is skewed to basic and acidic residues. Disordered regions lie at residues 1 to 39 (MEAEDLSKAEDRNEDPGSKNEGQLAAVQPDVPHGGQSSS), 944 to 993 (SHTH…QDST), 1837 to 1869 (VGAESTRNTSSPEAAAEGDSTVEGLQAPTKAHP), and 2309 to 2335 (ALSSGRHKESQDKNDHISQTNAENQDE). Polar residues predominate over residues 981–993 (QAPQPLGESQDST). A compositionally biased stretch (basic and acidic residues) spans 2314-2324 (RHKESQDKNDH). The 126-residue stretch at 2385-2510 (LDKEKVTQKF…DRSKAFKSFC (126 aa)) folds into the BEACH-type PH domain. Residues 2527-2821 (SLRRYPGSDR…QLFTKPHPAR (295 aa)) form the BEACH domain. WD repeat units follow at residues 2863–2922 (MYLF…YGSD), 2923–2972 (KVLM…PRGL), 2973–3014 (RLRQ…LDHL), 3015–3057 (THVT…GQPL), 3058–3141 (ASIT…ELDV), and 3142–3184 (SIAL…SADG). The disordered stretch occupies residues 3107–3128 (SVPGRPAGEEPPAQPPSPRGHK).

As to quaternary structure, interacts with HSP90AB1.

It is found in the early endosome. The protein resides in the endoplasmic reticulum. Functionally, plays a critical role in the regulation of cDC1-mediated cross-presentation of viral and tumor antigens in dendritic cells. Mechanistically, acts near the plasma membrane and interacts with endosomal membranes to promote endosomal-to-cytosol antigen trafficking. Also plays a role in B-cell survival through regulation of autophagy. This is WD repeat- and FYVE domain-containing protein 4 (WDFY4) from Homo sapiens (Human).